Here is a 215-residue protein sequence, read N- to C-terminus: Ribonuclease S-6 (215 aa).

The signal sequence occupies residues 1–22; the sequence is MFNLPLTSVFVIFLFALSPIYG. Position 32 (Gln32) interacts with RNA. A disulfide bridge connects residues Cys38 and Cys43. N-linked (GlcNAc...) asparagine glycosylation occurs at Asn49. His53 lines the RNA pocket. His53 functions as the Proton donor in the catalytic mechanism. Asn59 carries an N-linked (GlcNAc...) asparagine glycan. Cys67 and Cys116 are oxidised to a cystine. Residues 91–92, Arg94, Phe105, 108–109, and 112–113 contribute to the RNA site; these read DL, RE, and KH. Glu109 is a catalytic residue. His113 serves as the catalytic Proton acceptor. N-linked (GlcNAc...) asparagine glycans are attached at residues Asn160 and Asn172. Disulfide bonds link Cys175–Cys204 and Cys187–Cys198.

Belongs to the RNase T2 family.

It is found in the secreted. It localises to the extracellular space. The catalysed reaction is a ribonucleotidyl-ribonucleotide-RNA + H2O = a 3'-end 3'-phospho-ribonucleotide-RNA + a 5'-end dephospho-ribonucleoside-RNA + H(+). Self-incompatibility (SI) is the inherited ability of a flowering plant to prevent self-fertilization by discriminating between self and non-self pollen during pollination. In many species of the Solanaceae, self-incompatibility is controlled by the single, multiallelic locus S. This stylar glycoprotein is associated with expression of self-incompatibility in potato. This Nicotiana alata (Winged tobacco) protein is Ribonuclease S-6.